Consider the following 127-residue polypeptide: Glycine cleavage system H protein (127 aa).

The Lipoyl-binding domain occupies 24–105 (AALVGITDFA…YGEGWLVKIR (82 aa)). The residue at position 65 (K65) is an N6-lipoyllysine.

This sequence belongs to the GcvH family. The glycine cleavage system is composed of four proteins: P, T, L and H. Requires (R)-lipoate as cofactor.

Functionally, the glycine cleavage system catalyzes the degradation of glycine. The H protein shuttles the methylamine group of glycine from the P protein to the T protein. The chain is Glycine cleavage system H protein from Chlorobium limicola (strain DSM 245 / NBRC 103803 / 6330).